The chain runs to 239 residues: Purine nucleoside phosphorylase DeoD-type (239 aa).

Residue histidine 5 coordinates a purine D-ribonucleoside. Phosphate contacts are provided by residues glycine 21, arginine 25, arginine 44, and 88–91; that span reads RVGS. A purine D-ribonucleoside contacts are provided by residues 180 to 182 and 204 to 205; these read EME and SD. Aspartate 205 (proton donor) is an active-site residue.

Belongs to the PNP/UDP phosphorylase family. In terms of assembly, homohexamer; trimer of homodimers.

The catalysed reaction is a purine D-ribonucleoside + phosphate = a purine nucleobase + alpha-D-ribose 1-phosphate. It catalyses the reaction a purine 2'-deoxy-D-ribonucleoside + phosphate = a purine nucleobase + 2-deoxy-alpha-D-ribose 1-phosphate. Functionally, catalyzes the reversible phosphorolytic breakdown of the N-glycosidic bond in the beta-(deoxy)ribonucleoside molecules, with the formation of the corresponding free purine bases and pentose-1-phosphate. This Yersinia pseudotuberculosis serotype O:1b (strain IP 31758) protein is Purine nucleoside phosphorylase DeoD-type.